A 149-amino-acid polypeptide reads, in one-letter code: Calmodulin (149 aa).

A2 is modified (N-acetylalanine). EF-hand domains lie at 8 to 43 (EQIA…LGQN), 44 to 79 (PTEA…KMKD), 81 to 116 (DTEE…LGEK), and 117 to 149 (LTDE…MMAK). Residues D21, D23, D25, T27, E32, D57, D59, N61, T63, E68, D94, D96, N98, and E105 each contribute to the Ca(2+) site. K116 is modified (N6,N6,N6-trimethyllysine). Ca(2+) is bound by residues D130, D132, D134, H136, and E141.

The protein belongs to the calmodulin family.

Calmodulin mediates the control of a large number of enzymes, ion channels and other proteins by Ca(2+). Among the enzymes to be stimulated by the calmodulin-Ca(2+) complex are a number of protein kinases and phosphatases. In Stylonychia lemnae (Ciliate), this protein is Calmodulin.